A 1697-amino-acid polypeptide reads, in one-letter code: Phosphatidylinositol 3-kinase 3 (1697 aa).

Disordered regions lie at residues 57–91 (RSIN…TQPC), 169–229 (INNN…DSSI), 244–279 (KTTE…ENEI), 310–376 (KKNN…NSVG), 398–428 (SWTS…SGSS), and 440–504 (DLLK…NNDE). Low complexity-rich tracts occupy residues 60–87 (NNNN…NNNN), 170–196 (NNNN…NNNN), and 212–222 (NNNSNNNNNIN). Low complexity-rich tracts occupy residues 312 to 374 (NNNN…TTNS) and 398 to 408 (SWTSSKPTSSS). Composition is skewed to polar residues over residues 409-428 (IGFA…SGSS) and 444-456 (SPSS…SDIF). Residues 457 to 503 (NENNNNNNNNNNNNNNNNNNNNNNNNNNNNNNNNEELINNNNNNNND) are compositionally biased toward low complexity. A PI3K-RBD domain is found at 737-823 (PEFFVIRVHL…KGEIDLTMVE (87 aa)). A C2 PI3K-type domain is found at 888 to 1036 (VTENLQVRLL…QAIIIAFEFK (149 aa)). The region spanning 1060-1238 (GNELPVVTME…RVLSSGFLRY (179 aa)) is the PIK helical domain. Residues 1304-1581 (IPEKCKSMDS…LIHESIGTLT (278 aa)) form the PI3K/PI4K catalytic domain. The segment at 1310 to 1316 (SMDSAKV) is G-loop. The tract at residues 1447-1455 (GIGDRHNDN) is catalytic loop. The segment at 1466–1492 (HIDFGHFLGNFKTFAGFQREKAPFVLT) is activation loop. Residues 1609–1625 (ASSLNLNKNKPSSQSKL) show a composition bias toward low complexity. The segment at 1609-1697 (ASSLNLNKNK…DTEKENSIDK (89 aa)) is disordered. Tandem repeats lie at residues 1622–1626 (QSKLD), 1627–1631 (LSRSD), 1632–1636 (LSRSD), 1642–1646 (SSRLD), and 1647–1651 (LSRSD). A 5 X 5 AA approximate repeats region spans residues 1622–1651 (QSKLDLSRSDLSRSDSSRSDSSRLDLSRSD). Basic and acidic residues-rich tracts occupy residues 1626-1681 (DLSR…DKDN) and 1688-1697 (DTEKENSIDK). The segment at 1659 to 1672 (KEKEKEKEKEKEKE) is 7 X 2 AA tandem repeats of K-E.

This sequence belongs to the PI3/PI4-kinase family.

The enzyme catalyses a 1,2-diacyl-sn-glycero-3-phospho-(1D-myo-inositol) + ATP = a 1,2-diacyl-sn-glycero-3-phospho-(1D-myo-inositol-3-phosphate) + ADP + H(+). This Dictyostelium discoideum (Social amoeba) protein is Phosphatidylinositol 3-kinase 3 (pikC).